The sequence spans 111 residues: MADRVLRGSRLGAVSYETDRNHDLAPRQIARYRTDNGEEFEVPFADDAEIPGTWLCRNGMEGTLIEGDLPEPKKVKPPRTHWDMLLERRSIEELEELLKERLELIRSRRRG.

It belongs to the RNA polymerase-binding protein RbpA family. As to quaternary structure, forms a complex with the RNAP catalytic core and with free principal sigma factors.

Binds to RNA polymerase (RNAP), stimulating transcription from principal, but not alternative sigma factor promoters. This Mycobacterium tuberculosis (strain CDC 1551 / Oshkosh) protein is RNA polymerase-binding protein RbpA.